We begin with the raw amino-acid sequence, 272 residues long: Ribosomal RNA small subunit methyltransferase A (272 aa).

Residues Asn-18, Leu-20, Gly-45, Glu-66, Asp-91, and Asn-113 each coordinate S-adenosyl-L-methionine.

Belongs to the class I-like SAM-binding methyltransferase superfamily. rRNA adenine N(6)-methyltransferase family. RsmA subfamily.

It localises to the cytoplasm. The enzyme catalyses adenosine(1518)/adenosine(1519) in 16S rRNA + 4 S-adenosyl-L-methionine = N(6)-dimethyladenosine(1518)/N(6)-dimethyladenosine(1519) in 16S rRNA + 4 S-adenosyl-L-homocysteine + 4 H(+). Its function is as follows. Specifically dimethylates two adjacent adenosines (A1518 and A1519) in the loop of a conserved hairpin near the 3'-end of 16S rRNA in the 30S particle. May play a critical role in biogenesis of 30S subunits. The sequence is that of Ribosomal RNA small subunit methyltransferase A from Proteus mirabilis (strain HI4320).